The following is a 647-amino-acid chain: Threonine--tRNA ligase (647 aa).

Positions Met1 to Thr61 constitute a TGS domain. The segment at Asp242–Pro540 is catalytic. Zn(2+) contacts are provided by Cys336, His387, and His517.

It belongs to the class-II aminoacyl-tRNA synthetase family. In terms of assembly, homodimer. Zn(2+) serves as cofactor.

The protein localises to the cytoplasm. It carries out the reaction tRNA(Thr) + L-threonine + ATP = L-threonyl-tRNA(Thr) + AMP + diphosphate + H(+). Its function is as follows. Catalyzes the attachment of threonine to tRNA(Thr) in a two-step reaction: L-threonine is first activated by ATP to form Thr-AMP and then transferred to the acceptor end of tRNA(Thr). Also edits incorrectly charged L-seryl-tRNA(Thr). This Streptococcus pneumoniae serotype 2 (strain D39 / NCTC 7466) protein is Threonine--tRNA ligase.